The chain runs to 319 residues: ATP-dependent 6-phosphofructokinase (319 aa).

ATP is bound at residue Gly11. Position 21–25 (21–25 (RAVVR)) interacts with ADP. ATP is bound by residues 72–73 (RY) and 102–105 (GDGS). Asp103 is a Mg(2+) binding site. 125 to 127 (TID) serves as a coordination point for substrate. The Proton acceptor role is filled by Asp127. Arg154 is an ADP binding site. Substrate contacts are provided by residues Arg162 and 169 to 171 (MGR). Residues 185–187 (GAE), Arg211, and 213–215 (KKH) contribute to the ADP site. Substrate-binding positions include Glu222, Arg243, and 249–252 (HVQR).

Belongs to the phosphofructokinase type A (PFKA) family. ATP-dependent PFK group I subfamily. Prokaryotic clade 'B1' sub-subfamily. As to quaternary structure, homotetramer. Mg(2+) serves as cofactor.

It is found in the cytoplasm. It catalyses the reaction beta-D-fructose 6-phosphate + ATP = beta-D-fructose 1,6-bisphosphate + ADP + H(+). It functions in the pathway carbohydrate degradation; glycolysis; D-glyceraldehyde 3-phosphate and glycerone phosphate from D-glucose: step 3/4. Its activity is regulated as follows. Allosterically activated by ADP and other diphosphonucleosides, and allosterically inhibited by phosphoenolpyruvate. In terms of biological role, catalyzes the phosphorylation of D-fructose 6-phosphate to fructose 1,6-bisphosphate by ATP, the first committing step of glycolysis. This is ATP-dependent 6-phosphofructokinase from Listeria welshimeri serovar 6b (strain ATCC 35897 / DSM 20650 / CCUG 15529 / CIP 8149 / NCTC 11857 / SLCC 5334 / V8).